The chain runs to 254 residues: Ubiquinone biosynthesis O-methyltransferase (254 aa).

The S-adenosyl-L-methionine site is built by Arg47, Gly78, Asp99, and Met141.

It belongs to the methyltransferase superfamily. UbiG/COQ3 family.

It carries out the reaction a 3-demethylubiquinol + S-adenosyl-L-methionine = a ubiquinol + S-adenosyl-L-homocysteine + H(+). The enzyme catalyses a 3-(all-trans-polyprenyl)benzene-1,2-diol + S-adenosyl-L-methionine = a 2-methoxy-6-(all-trans-polyprenyl)phenol + S-adenosyl-L-homocysteine + H(+). Its pathway is cofactor biosynthesis; ubiquinone biosynthesis. In terms of biological role, O-methyltransferase that catalyzes the 2 O-methylation steps in the ubiquinone biosynthetic pathway. The chain is Ubiquinone biosynthesis O-methyltransferase from Rhodopseudomonas palustris (strain BisB18).